Reading from the N-terminus, the 343-residue chain is Major capsid protein VP1 (343 aa).

The protein belongs to the polyomaviruses coat protein VP1 family. Homomultimer; disulfide-linked. The virus capsid is composed of 72 icosahedral units, each one composed of five disulfide-linked copies of VP1. Interacts with minor capsid proteins VP2 and VP3.

The protein resides in the virion. The protein localises to the host nucleus. Its function is as follows. Forms an icosahedral capsid with a T=7 symmetry and a 46-48 nm diameter. The capsid is composed of 72 pentamers linked to each other by disulfide bonds and associated with VP2 or VP3 proteins. Interacts with sialic acids on the cell surface to provide virion attachment to target cell. Once attached, the virion is internalized by endocytosis and traffics to the endoplasmic reticulum. Inside the endoplasmic reticulum, the protein folding machinery isomerizes VP1 interpentamer disulfide bonds, thereby triggering initial uncoating. Next, the virion uses the endoplasmic reticulum-associated degradation machinery to probably translocate in the cytosol before reaching the nucleus. Nuclear entry of the viral DNA involves the selective exposure and importin recognition of VP2/Vp3 nuclear localization signal. In late phase of infection, neo-synthesized VP1 encapsulates replicated genomic DNA in the nucleus, and participates in rearranging nucleosomes around the viral DNA. This is Major capsid protein VP1 from Psittacidae (parrots).